Consider the following 175-residue polypeptide: Nudix hydrolase 25 (175 aa).

A Nudix hydrolase domain is found at 7–155; that stretch reads GYRPNVGVCL…KRPTYEEVIK (149 aa). Gly40, Glu55, and Glu59 together coordinate Mn(2+). The Nudix box motif lies at 40–61; the sequence is GGIEDGEDPKSAAMRELQEETG.

This sequence belongs to the Nudix hydrolase family. Requires Mn(2+) as cofactor.

The catalysed reaction is P(1),P(4)-bis(5'-guanosyl) tetraphosphate + H2O = GMP + GTP + 2 H(+). Functionally, mediates the hydrolysis of diadenosine 5',5''-P(1)P(4) tetraphosphate (Ap(4)A), a signaling molecule involved in regulation of DNA replication and repair. This Arabidopsis thaliana (Mouse-ear cress) protein is Nudix hydrolase 25.